A 408-amino-acid polypeptide reads, in one-letter code: UDP-N-acetylglucosamine--dolichyl-phosphate N-acetylglucosaminephosphotransferase (408 aa).

Over 1-10 (MWAFPELPMP) the chain is Lumenal. A helical membrane pass occupies residues 11 to 38 (LLVNLIGSLMGFVATVTLIPAFRGHFIA). The Cytoplasmic portion of the chain corresponds to 39 to 58 (ARLCGQDLNKSSREQIPESQ). Residues 44 to 46 (QDL) and E56 contribute to the UDP-N-acetyl-alpha-D-glucosamine site. Residues 59 to 78 (GVISGAVFLIILFCFIPFPF) traverse the membrane as a helical segment. Residues 79–91 (LNCFVEQQCKAFP) are Lumenal-facing. A helical membrane pass occupies residues 92 to 118 (HHEFVALIGALLAICCMIFLGFADDVL). Topologically, residues 119-121 (NLR) are cytoplasmic. Residues 122-143 (WRHKLLLPTAASLPLLMVYFTN) traverse the membrane as a helical segment. K125 is a binding site for dolichyl phosphate. Residues 144-166 (FGNTTIVVPKPLRPILGLHLDLG) are Lumenal-facing. Residue N146 is glycosylated (N-linked (GlcNAc...) asparagine). A helical transmembrane segment spans residues 167-186 (ILYYVYMGLLAVFCTNAINI). Residue 178 to 186 (VFCTNAINI) coordinates dolichyl phosphate. Position 185 (N185) interacts with Mg(2+). Over 187–192 (LAGING) the chain is Cytoplasmic. N191 contributes to the UDP-N-acetyl-alpha-D-glucosamine binding site. Residues 193–213 (LEAGQSLVISASIIVFNLVEL) traverse the membrane as a helical segment. The Lumenal portion of the chain corresponds to 214 to 218 (DGDYR). A helical transmembrane segment spans residues 219–242 (DDHIFSLYFMIPFFFTTLGLLYHN). At 243 to 250 (WYPSRVFV) the chain is on the cytoplasmic side. A helical transmembrane segment spans residues 251–269 (GDTFCYFAGMTFAVVGILG). D252 provides a ligand contact to Mg(2+). Residues 270-271 (HF) lie on the Lumenal side of the membrane. Residues 272–293 (SKTMLLFFMPQVFNFLYSLPQL) form a helical membrane-spanning segment. The Cytoplasmic portion of the chain corresponds to 294–375 (LHIIPCPRHR…LLLKVFGPMH (82 aa)). 301-303 (RHR) lines the UDP-N-acetyl-alpha-D-glucosamine pocket. A helical transmembrane segment spans residues 376–400 (ERNLTLLLLLLQVVGSAVTFSIRYQ). The Lumenal portion of the chain corresponds to 401-408 (LVRLFYDV).

The protein belongs to the glycosyltransferase 4 family. Homodimer. It depends on Mg(2+) as a cofactor.

The protein resides in the endoplasmic reticulum membrane. The catalysed reaction is a di-trans,poly-cis-dolichyl phosphate + UDP-N-acetyl-alpha-D-glucosamine = an N-acetyl-alpha-D-glucosaminyl-diphospho-di-trans,poly-cis-dolichol + UMP. The protein operates within protein modification; protein glycosylation. Its activity is regulated as follows. Inhibited by natural nucleoside antibiotic tunicamycin, which acts as a structural analog and competitor of UDP-GlcNAc. Activated by Man-P-Dol. Activated by manganese. Inhibited by diumycin. UDP-N-acetylglucosamine--dolichyl-phosphate N-acetylglucosaminephosphotransferase that operates in the biosynthetic pathway of dolichol-linked oligosaccharides, the glycan precursors employed in protein asparagine (N)-glycosylation. The assembly of dolichol-linked oligosaccharides begins on the cytosolic side of the endoplasmic reticulum membrane and finishes in its lumen. The sequential addition of sugars to dolichol pyrophosphate produces dolichol-linked oligosaccharides containing fourteen sugars, including two GlcNAcs, nine mannoses and three glucoses. Once assembled, the oligosaccharide is transferred from the lipid to nascent proteins by oligosaccharyltransferases. Catalyzes the initial step of dolichol-linked oligosaccharide biosynthesis, transfering GlcNAc-1-P from cytosolic UDP-GlcNAc onto the carrier lipid dolichyl phosphate (P-dolichol), yielding GlcNAc-P-P-dolichol embedded in the cytoplasmic leaflet of the endoplasmic reticulum membrane. In Bos taurus (Bovine), this protein is UDP-N-acetylglucosamine--dolichyl-phosphate N-acetylglucosaminephosphotransferase.